The chain runs to 282 residues: Pantothenate synthetase (282 aa).

Residue 28 to 35 coordinates ATP; it reads MGALHSGH. His-35 acts as the Proton donor in catalysis. Gln-59 lines the (R)-pantoate pocket. Gln-59 is a binding site for beta-alanine. 146-149 is an ATP binding site; the sequence is GEKD. Gln-152 contributes to the (R)-pantoate binding site. ATP contacts are provided by residues Val-175 and 183–186; that span reads LSSR.

Belongs to the pantothenate synthetase family. Homodimer.

Its subcellular location is the cytoplasm. It catalyses the reaction (R)-pantoate + beta-alanine + ATP = (R)-pantothenate + AMP + diphosphate + H(+). It functions in the pathway cofactor biosynthesis; (R)-pantothenate biosynthesis; (R)-pantothenate from (R)-pantoate and beta-alanine: step 1/1. Its function is as follows. Catalyzes the condensation of pantoate with beta-alanine in an ATP-dependent reaction via a pantoyl-adenylate intermediate. This is Pantothenate synthetase from Salinispora arenicola (strain CNS-205).